A 458-amino-acid chain; its full sequence is MTFRKSFDCYDFYDRAKVGEKCTLDDWDLMRIPMKAMELKQKYGLDFKGEFIPTDKDMMEKLFKAGFEMLLECGIYCTDTHRIVKYTEDEIWDAINNAQKEFVLGTGRDAVNVRKRSVGDKAKPIVQGGPTGSPISEDVFMPVHMSYALEKEVDTIVNGVMTTVRGKAPVPKSPYEVLAAKTETRLIKNACAMAGRPGMGVOGPETSLSAQGNISADCAGGMTCTDSHEVSQLCELKIDLDAISVIAHYNGNSDIIMDEQMPIFGGYAGGIEETTIVNIATHINSLVMSNASWHLDGPVHIRWGSTNTRETLTIAGWACATISEFTDILSGNQYYPCAGPCTEMCLLEASAQSITDTASGREILSGVASAKGVVTDKTTGMEARMMGEVARATAGVEISEVNVILDKLVALYEKNYASAPAGKTFQECYDVKTVTPTEEYMQVYDGARKKLEDLGLVF.

Position 202 (Pyl202) is a non-standard amino acid, pyrrolysine.

It belongs to the monomethylamine methyltransferase family.

The catalysed reaction is Co(I)-[methylamine-specific corrinoid protein] + methylamine + H(+) = methyl-Co(III)-[methylamine-specific corrinoid protein] + NH4(+). The protein operates within one-carbon metabolism; methanogenesis from methylamine. Catalyzes the transfer of the methyl group from monomethylamine to the corrinoid cofactor of MtmC. This Methanosarcina barkeri (strain Fusaro / DSM 804) protein is Monomethylamine methyltransferase MtmB3 (mtmB3).